A 321-amino-acid chain; its full sequence is Lipoyl synthase (321 aa).

Residues Cys68, Cys73, Cys79, Cys94, Cys98, Cys101, and Ser308 each contribute to the [4Fe-4S] cluster site. A Radical SAM core domain is found at 80-297 (FNHGTATFMI…KVLADELGFT (218 aa)).

Belongs to the radical SAM superfamily. Lipoyl synthase family. It depends on [4Fe-4S] cluster as a cofactor.

The protein resides in the cytoplasm. It carries out the reaction [[Fe-S] cluster scaffold protein carrying a second [4Fe-4S](2+) cluster] + N(6)-octanoyl-L-lysyl-[protein] + 2 oxidized [2Fe-2S]-[ferredoxin] + 2 S-adenosyl-L-methionine + 4 H(+) = [[Fe-S] cluster scaffold protein] + N(6)-[(R)-dihydrolipoyl]-L-lysyl-[protein] + 4 Fe(3+) + 2 hydrogen sulfide + 2 5'-deoxyadenosine + 2 L-methionine + 2 reduced [2Fe-2S]-[ferredoxin]. It functions in the pathway protein modification; protein lipoylation via endogenous pathway; protein N(6)-(lipoyl)lysine from octanoyl-[acyl-carrier-protein]: step 2/2. Catalyzes the radical-mediated insertion of two sulfur atoms into the C-6 and C-8 positions of the octanoyl moiety bound to the lipoyl domains of lipoate-dependent enzymes, thereby converting the octanoylated domains into lipoylated derivatives. This Shewanella denitrificans (strain OS217 / ATCC BAA-1090 / DSM 15013) protein is Lipoyl synthase.